The chain runs to 70 residues: MLARLLVGLIKLYQWTLSPLLGQRCRFYPTCSQYAVEAIQKHGAWRGAFFTICRLSKCHPWHDGGHDPVP.

Belongs to the UPF0161 family.

It is found in the cell inner membrane. Functionally, could be involved in insertion of integral membrane proteins into the membrane. The polypeptide is Putative membrane protein insertion efficiency factor (Methylobacillus flagellatus (strain ATCC 51484 / DSM 6875 / VKM B-1610 / KT)).